The chain runs to 194 residues: ATP-dependent Clp protease proteolytic subunit 3 (194 aa).

The active-site Nucleophile is Ser96. The active site involves His121.

The protein belongs to the peptidase S14 family. In terms of assembly, fourteen ClpP subunits assemble into 2 heptameric rings which stack back to back to give a disk-like structure with a central cavity, resembling the structure of eukaryotic proteasomes.

The protein resides in the cytoplasm. It catalyses the reaction Hydrolysis of proteins to small peptides in the presence of ATP and magnesium. alpha-casein is the usual test substrate. In the absence of ATP, only oligopeptides shorter than five residues are hydrolyzed (such as succinyl-Leu-Tyr-|-NHMec, and Leu-Tyr-Leu-|-Tyr-Trp, in which cleavage of the -Tyr-|-Leu- and -Tyr-|-Trp bonds also occurs).. In terms of biological role, cleaves peptides in various proteins in a process that requires ATP hydrolysis. Has a chymotrypsin-like activity. Plays a major role in the degradation of misfolded proteins. The sequence is that of ATP-dependent Clp protease proteolytic subunit 3 from Prochlorococcus marinus (strain NATL2A).